The chain runs to 238 residues: Ribosomal RNA small subunit methyltransferase G (238 aa).

Residues G79, F84, 102 to 104 (EAT), 130 to 131 (IE), and R149 each bind S-adenosyl-L-methionine.

Belongs to the methyltransferase superfamily. RNA methyltransferase RsmG family.

The protein resides in the cytoplasm. Its function is as follows. Specifically methylates the N7 position of a guanine in 16S rRNA. This Chloroflexus aggregans (strain MD-66 / DSM 9485) protein is Ribosomal RNA small subunit methyltransferase G.